A 450-amino-acid chain; its full sequence is Glucose-6-phosphate isomerase (450 aa).

The active-site Proton donor is the glutamate 290. Catalysis depends on residues histidine 311 and lysine 425.

This sequence belongs to the GPI family.

The protein resides in the cytoplasm. The catalysed reaction is alpha-D-glucose 6-phosphate = beta-D-fructose 6-phosphate. Its pathway is carbohydrate biosynthesis; gluconeogenesis. It functions in the pathway carbohydrate degradation; glycolysis; D-glyceraldehyde 3-phosphate and glycerone phosphate from D-glucose: step 2/4. Its function is as follows. Catalyzes the reversible isomerization of glucose-6-phosphate to fructose-6-phosphate. This Limosilactobacillus fermentum (Lactobacillus fermentum) protein is Glucose-6-phosphate isomerase.